The sequence spans 248 residues: 26.2 kDa heat shock protein, mitochondrial (248 aa).

Residues 1 to 32 (MASTVALKGRPLATLLRQLLAADAPPAATGRP) constitute a mitochondrion transit peptide. Positions 26-48 (PAATGRPVAAAPAASGKPVTAPA) are disordered. One can recognise a sHSP domain in the interval 139–248 (ATAAARRGGW…RKDVFQVNVE (110 aa)).

Belongs to the small heat shock protein (HSP20) family. As to quaternary structure, may form oligomeric structures.

It is found in the mitochondrion. In Oryza sativa subsp. japonica (Rice), this protein is 26.2 kDa heat shock protein, mitochondrial (HSP26.2).